Consider the following 212-residue polypeptide: MHKDQIISQLIKEKIITISPDKPFTYASGMLSPIYTDLRLTVSYPDLRDMIASDLSNLIAAEFPQATIIGGVATAGIPHAALVAEKLHLPMIYVRPKPKDHGKGRQIEGRFSENDQIVLIDDLITTGGSVLNAVKATEKDGGKVAGVASIFTYYLPDAKENFKEANVKYTPLLSYPELLKKENESGHITSDQYDILKTWHEDPWAWGKKFNS.

5-phospho-alpha-D-ribose 1-diphosphate is bound by residues Arg-95, Lys-99, His-101, and 121–129; that span reads DDLITTGGS. Thr-125 contributes to the orotate binding site.

Belongs to the purine/pyrimidine phosphoribosyltransferase family. PyrE subfamily. Homodimer. It depends on Mg(2+) as a cofactor.

The enzyme catalyses orotidine 5'-phosphate + diphosphate = orotate + 5-phospho-alpha-D-ribose 1-diphosphate. It functions in the pathway pyrimidine metabolism; UMP biosynthesis via de novo pathway; UMP from orotate: step 1/2. In terms of biological role, catalyzes the transfer of a ribosyl phosphate group from 5-phosphoribose 1-diphosphate to orotate, leading to the formation of orotidine monophosphate (OMP). The chain is Orotate phosphoribosyltransferase from Lactobacillus johnsonii (strain CNCM I-12250 / La1 / NCC 533).